Consider the following 238-residue polypeptide: uncharacterized protein (238 aa).

Belongs to the mimivirus L74/L77/R857 family.

This is an uncharacterized protein from Acanthamoeba polyphaga mimivirus (APMV).